Consider the following 547-residue polypeptide: T-complex protein 1 subunit alpha (547 aa).

It belongs to the TCP-1 chaperonin family. In terms of assembly, heterooligomeric complex of about 850 to 900 kDa that forms two stacked rings, 12 to 16 nm in diameter.

It is found in the cytoplasm. Molecular chaperone; assists the folding of proteins upon ATP hydrolysis. Known to play a role, in vitro, in the folding of actin and tubulin. This chain is T-complex protein 1 subunit alpha, found in Tetrahymena pyriformis.